A 170-amino-acid polypeptide reads, in one-letter code: Translation machinery-associated protein 16 homolog (170 aa).

Belongs to the TMA16 family.

In Dictyostelium discoideum (Social amoeba), this protein is Translation machinery-associated protein 16 homolog.